The primary structure comprises 569 residues: Adenine deaminase (569 aa).

This sequence belongs to the metallo-dependent hydrolases superfamily. Adenine deaminase family. Mn(2+) serves as cofactor.

The enzyme catalyses adenine + H2O + H(+) = hypoxanthine + NH4(+). The chain is Adenine deaminase from Desulfitobacterium hafniense (strain Y51).